The sequence spans 208 residues: Platelet glycoprotein Ib beta chain (208 aa).

Positions 1–26 (MGSGPRGAVSLLLLMLAPPSCPAADC) are cleaved as a signal peptide. 2 cysteine pairs are disulfide-bonded: C26-C32 and C30-C39. Residues 27–55 (PAPCSCAGTLVDCGRRGLTWASLPTSFPV) form the LRRNT domain. The Extracellular portion of the chain corresponds to 27-147 (PAPCSCAGTL…RAACAPGPLC (121 aa)). Residues 60 to 83 (LVLTGNNLTALPSGLLDALPAVRT) form an LRR repeat. N66 is a glycosylation site (N-linked (GlcNAc...) asparagine). Residues 89–143 (NPWRCDCRLVPLRAWLAGRPERAPYRDLRCVAPPAVRGRLLPYLAEDDVRAACAP) enclose the LRRCT domain. 2 disulfides stabilise this stretch: C93/C118 and C95/C141. A helical transmembrane segment spans residues 148–172 (WGALAAELALLGLGLLHALLLVLLL). The Cytoplasmic segment spans residues 173–208 (CRLRRLRARARARARAALRLSLTDPLVAEQDGTDES). S193 bears the Phosphoserine; by PKA mark. The residue at position 195 (T195) is a Phosphothreonine.

In terms of assembly, two GP-Ib beta are disulfide-linked to one GP-Ib alpha. GP-IX is complexed with the GP-Ib heterodimer via a non covalent linkage. Interacts with TRAF4.

It localises to the membrane. Its function is as follows. Gp-Ib, a surface membrane protein of platelets, participates in the formation of platelet plugs by binding to von Willebrand factor, which is already bound to the subendothelium. The sequence is that of Platelet glycoprotein Ib beta chain (GP1BB) from Papio cynocephalus (Yellow baboon).